The following is a 212-amino-acid chain: MQLFHLCLIISCSCPTVQASKLCLGWLWDMDIDPYKEFGASVELLSFLPSDFFPSVRDLLDTATALYRDALESPEHCTPHHTALRHVCLCWGDLMNLATWVGTNLEDQASRDLVVSYVNTNMGLKFRQLLWFHISCLTFGRDLVLEYLVSFGVWIRTPPAYRPSNAPILSTLPETTVVRQRGRTIRRRTPSPRRRRSQSPRRRRSQSRESQC.

The signal sequence occupies residues 1–19 (MQLFHLCLIISCSCPTVQA). The interval 25 to 27 (GWL) is HBEAG. The disordered stretch occupies residues 179-212 (RQRGRTIRRRTPSPRRRRSQSPRRRRSQSRESQC). Over residues 180-205 (QRGRTIRRRTPSPRRRRSQSPRRRRS) the composition is skewed to basic residues. The stretch at 184–190 (TIRRRTP) is one 1; half-length repeat. Residues 184–206 (TIRRRTPSPRRRRSQSPRRRRSQ) are 3 X 8 AA repeats of S-P-R-R-R-R-S-Q. The propeptide occupies 184–212 (TIRRRTPSPRRRRSQSPRRRRSQSRESQC). 2 consecutive repeat copies span residues 191–198 (SPRRRRSQ) and 199–206 (SPRRRRSQ).

It belongs to the orthohepadnavirus precore antigen family. In terms of assembly, homodimerizes. In terms of processing, phosphorylated. Cleaved by host furin.

The protein resides in the secreted. It is found in the host nucleus. In terms of biological role, may regulate immune response to the intracellular capsid in acting as a T-cell tolerogen, by having an immunoregulatory effect which prevents destruction of infected cells by cytotoxic T-cells. This immune regulation may predispose to chronicity during perinatal infections and prevent severe liver injury during adult infections. The polypeptide is External core antigen (Hepatitis B virus genotype D subtype ayw (isolate Australia/AustKW/1991) (HBV-D)).